The following is a 301-amino-acid chain: MFFREDKSVAFRLRSAALSGCATGQSDAVTDPLSVLEVSQTETREALMLFVSYNETGASVTIFTPELVARLSKSYRFLRVEAPHSAYTLSPEARERNRLLFSEYEVDGLPFLVLQSAQGDAYFAQRIHSTLSSEQELWALIRSADASRKKVLAARDRIAQTEAAEKAIAIDAFLKTVRYPRSARYDALRKEALQADHENVSGLHGDYMFHLARRRAEKFIKQENLVAAGNAYKDLAQSPFLSASQKQEAWYLTAYTYALSEKVSTEDVVACLRKAVAAHPHAARVAQIKQTIKKLLTERGI.

An N-terminal signal peptide occupies residues 1 to 28; sequence MFFREDKSVAFRLRSAALSGCATGQSDA.

This is an uncharacterized protein from Treponema pallidum (strain Nichols).